The chain runs to 34 residues: Trypsin inhibitor 2 (34 aa).

Residues Ser-1–Gly-34 constitute a cross-link (cyclopeptide (Ser-Gly)). The segment at residues Asp-4 to Gly-5 is a cross-link ((2-aminosuccinimidyl)acetic acid (Asp-Gly); alternate). Residues Asp-4–Gly-5 constitute a cross-link (isoaspartyl glycine isopeptide (Asp-Gly); alternate). 3 disulfides stabilise this stretch: Cys-8-Cys-25, Cys-15-Cys-27, and Cys-21-Cys-33.

Post-translationally, a cyclic succinimide probably forms by loss of water between Asp-4 and Gly-5, that can then rehydrate to either the original peptide bond or to a beta-aspartyl isopeptide bond. Three isoforms of MCoTI-II are detected, two with the parent molecular weight, corresponding to the unmodified and proposed isopeptide forms, and one with a molecular weight 18 Da lower, corresponding to a succinimide cross-linked form. In terms of processing, this is a cyclic peptide.

It is found in the secreted. Its function is as follows. Inhibits trypsin; probably participates in a plant defense mechanism. The sequence is that of Trypsin inhibitor 2 from Momordica cochinchinensis (Spiny bitter cucumber).